The primary structure comprises 572 residues: MLKNPATKYRSFKPVTLTDRQWPSRTITHPPIWMSTDLRDGNQSLFEPMDAQRKMRMFKTLVQIGFKEIEVAFPSASQTDFNFVRELIEGGHIPDDVTIEVLTQARDDLIERTFESLRGVPRAIVHLYNATAPEFRKIVFNLEKSGVKELAQNAARTMKRIAATMPETQFTFQYSPEVFSGTEIEFAKEVCDAVFDVWQPTPEHKAIVNLPATVEMSTPNIYADQIEWMHRNLARRDSLIISVHPHNDRGTAVAAAELAVMAGADRIEGCLFGNGERTGNVDLVTLALNLYTQGVDPGLDFSNINEVARTAEECTQLPIHPRHPYVGDLVFTAFSGSHQDAIKKGFAVQKPDAVWEVPYMPIDPADLGRTYDSVIRVNSQSGKGGIAYLLEQGYGVVLPRRLQVDFSSAVQRFTDDSGQEVTSAQIWELFQQEYVQNTAPIHYVGHSLSEREGRERIKLTVDIHGTRRVLTGEGNGPLDALMHAIGVPVRIQHYEERALTQGADARAVAVAEMAGADVTGSAFGVGIDANLVTASIRAVISGVNRAYARVNAQAQENFFDAAMNDAAESVGV.

Positions 31 to 305 constitute a Pyruvate carboxyltransferase domain; it reads PIWMSTDLRD…DPGLDFSNIN (275 aa). Residues aspartate 40, histidine 244, histidine 246, and asparagine 280 each contribute to the Mg(2+) site. A regulatory domain region spans residues 437-572; that stretch reads NTAPIHYVGH…MNDAAESVGV (136 aa).

This sequence belongs to the alpha-IPM synthase/homocitrate synthase family. LeuA type 2 subfamily. In terms of assembly, homodimer. Requires Mg(2+) as cofactor.

It is found in the cytoplasm. It catalyses the reaction 3-methyl-2-oxobutanoate + acetyl-CoA + H2O = (2S)-2-isopropylmalate + CoA + H(+). Its pathway is amino-acid biosynthesis; L-leucine biosynthesis; L-leucine from 3-methyl-2-oxobutanoate: step 1/4. In terms of biological role, catalyzes the condensation of the acetyl group of acetyl-CoA with 3-methyl-2-oxobutanoate (2-ketoisovalerate) to form 3-carboxy-3-hydroxy-4-methylpentanoate (2-isopropylmalate). In Paraburkholderia phytofirmans (strain DSM 17436 / LMG 22146 / PsJN) (Burkholderia phytofirmans), this protein is 2-isopropylmalate synthase.